The chain runs to 334 residues: Petrobactin import system permease protein FatD (334 aa).

9 consecutive transmembrane segments (helical) span residues 24–44 (FIIA…TGVY), 64–84 (TVAL…MQLI), 98–118 (IEWS…PTLV), 119–139 (QRMT…FLFL), 152–172 (IIGL…GLLF), 197–217 (LWLI…LTLA), 234–254 (IVLF…AVIG), 277–297 (SNLP…DIIS), and 304–324 (FELP…ITIL).

It belongs to the binding-protein-dependent transport system permease family. FecCD subfamily. The complex is composed of two ATP-binding proteins (FatE), two transmembrane proteins (FatC and FatD) and a solute-binding protein (FpuA).

The protein resides in the cell membrane. Its function is as follows. Part of an ABC transporter complex involved in ferric-petrobactin uptake. Probably responsible for the translocation of the substrate across the membrane. The chain is Petrobactin import system permease protein FatD from Bacillus anthracis.